The sequence spans 185 residues: Translation initiation factor IF-3 (185 aa).

It belongs to the IF-3 family. As to quaternary structure, monomer.

Its subcellular location is the cytoplasm. Its function is as follows. IF-3 binds to the 30S ribosomal subunit and shifts the equilibrium between 70S ribosomes and their 50S and 30S subunits in favor of the free subunits, thus enhancing the availability of 30S subunits on which protein synthesis initiation begins. The polypeptide is Translation initiation factor IF-3 (Bacteroides thetaiotaomicron (strain ATCC 29148 / DSM 2079 / JCM 5827 / CCUG 10774 / NCTC 10582 / VPI-5482 / E50)).